The primary structure comprises 104 residues: Large ribosomal subunit protein uL24 (104 aa).

This sequence belongs to the universal ribosomal protein uL24 family. Part of the 50S ribosomal subunit.

In terms of biological role, one of two assembly initiator proteins, it binds directly to the 5'-end of the 23S rRNA, where it nucleates assembly of the 50S subunit. One of the proteins that surrounds the polypeptide exit tunnel on the outside of the subunit. The chain is Large ribosomal subunit protein uL24 from Baumannia cicadellinicola subsp. Homalodisca coagulata.